The primary structure comprises 142 residues: Secreted RxLR effector protein 161 (142 aa).

Positions 1-27 (MKNVPYLSAVGAIMYLMVVTRPDLAAA) are cleaved as a signal peptide. The RxLR signature appears at 48-51 (RVLR).

Belongs to the RxLR effector family.

Its subcellular location is the secreted. The protein resides in the host chloroplast envelope. It is found in the host nucleus. In terms of biological role, secreted effector that completely suppresses the host cell death induced by cell death-inducing proteins. This chain is Secreted RxLR effector protein 161, found in Plasmopara viticola (Downy mildew of grapevine).